Here is a 130-residue protein sequence, read N- to C-terminus: Transcription antitermination protein NusB (130 aa).

This sequence belongs to the NusB family.

Functionally, involved in transcription antitermination. Required for transcription of ribosomal RNA (rRNA) genes. Binds specifically to the boxA antiterminator sequence of the ribosomal RNA (rrn) operons. In Sulfurovum sp. (strain NBC37-1), this protein is Transcription antitermination protein NusB.